A 352-amino-acid chain; its full sequence is Glycerol-1-phosphate dehydrogenase [NAD(P)+] (352 aa).

Residues 99-103 (GTKID) and 121-124 (TSPS) each bind NAD(+). Position 126 (Asp126) interacts with substrate. Residue Ser130 coordinates NAD(+). Asp173 lines the substrate pocket. Residues Asp173 and His253 each contribute to the Zn(2+) site. His257 contributes to the substrate binding site. His269 is a binding site for Zn(2+).

Belongs to the glycerol-1-phosphate dehydrogenase family. Zn(2+) serves as cofactor.

Its subcellular location is the cytoplasm. It carries out the reaction sn-glycerol 1-phosphate + NAD(+) = dihydroxyacetone phosphate + NADH + H(+). The catalysed reaction is sn-glycerol 1-phosphate + NADP(+) = dihydroxyacetone phosphate + NADPH + H(+). Its pathway is membrane lipid metabolism; glycerophospholipid metabolism. In terms of biological role, catalyzes the NAD(P)H-dependent reduction of dihydroxyacetonephosphate (DHAP or glycerone phosphate) to glycerol 1-phosphate (G1P). The G1P thus generated is used as the glycerophosphate backbone of phospholipids in the cellular membranes of Archaea. The chain is Glycerol-1-phosphate dehydrogenase [NAD(P)+] from Thermoplasma volcanium (strain ATCC 51530 / DSM 4299 / JCM 9571 / NBRC 15438 / GSS1).